A 1033-amino-acid polypeptide reads, in one-letter code: Probable beta-glucosidase E (1033 aa).

The interval 1 to 71 (MAPPDSTHGG…RSGSYKLRPV (71 aa)) is disordered. Over 1-161 (MAPPDSTHGG…PVKYARIWWR (161 aa)) the chain is Cytoplasmic. 2 stretches are compositionally biased toward basic and acidic residues: residues 11–20 (SFRDHLKTND) and 59–71 (DLER…LRPV). Residues 162-182 (TLLAVVVTLVVVVWGFLSFAV) traverse the membrane as a helical; Signal-anchor for type II membrane protein segment. Topologically, residues 183–1033 (SHREEPTVWP…SRDLPLMGEY (851 aa)) are extracellular. N-linked (GlcNAc...) asparagine glycosylation is found at asparagine 224, asparagine 232, and asparagine 418. Aspartate 446 is an active-site residue. Residues asparagine 489, asparagine 528, asparagine 593, asparagine 909, asparagine 918, and asparagine 976 are each glycosylated (N-linked (GlcNAc...) asparagine).

This sequence belongs to the glycosyl hydrolase 3 family.

It is found in the cell membrane. The catalysed reaction is Hydrolysis of terminal, non-reducing beta-D-glucosyl residues with release of beta-D-glucose.. The protein operates within glycan metabolism; cellulose degradation. Its function is as follows. Beta-glucosidases are one of a number of cellulolytic enzymes involved in the degradation of cellulosic biomass. Catalyzes the last step releasing glucose from the inhibitory cellobiose. This Aspergillus fumigatus (strain CBS 144.89 / FGSC A1163 / CEA10) (Neosartorya fumigata) protein is Probable beta-glucosidase E (bglE).